Consider the following 212-residue polypeptide: B3 domain-containing protein Os04g0386900 (212 aa).

The tract at residues 1–78 (MRAATALPSI…PRPPEPEPEK (78 aa)) is disordered. 2 stretches are compositionally biased toward low complexity: residues 8–23 (PSIPSSSSPSPMASDP) and 36–46 (DAGAEDPAAVD). The segment at residues 93–191 (FTCIMCKSHV…EFRVQVLRAE (99 aa)) is a DNA-binding region (TF-B3).

Its subcellular location is the nucleus. The polypeptide is B3 domain-containing protein Os04g0386900 (Oryza sativa subsp. japonica (Rice)).